An 823-amino-acid chain; its full sequence is Protein FAM83G (823 aa).

Ala-2 bears the N-acetylalanine mark. The DUF1669 stretch occupies residues 2-312 (AFSQVQCLDD…LYLMSHSVSL (311 aa)). The residue at position 4 (Ser-4) is a Phosphoserine. A disordered region spans residues 75–108 (DPGSEDPRGTGPSQGPEDNGVGDGEEASGADGVP). Phosphoserine is present on residues Ser-124, Ser-127, and Ser-356. The interval 450–823 (RDTSQASAQH…AQAPRDRKDP (374 aa)) is disordered. Over residues 452–465 (TSQASAQHQLWKQS) the composition is skewed to polar residues. Pro residues predominate over residues 497 to 508 (DPEPLPPVPKPR). The span at 529 to 543 (LPKEEAPQNGTDHRL) shows a compositional bias: basic and acidic residues. Residues 578 to 587 (GVEEEDDDDY) show a composition bias toward acidic residues. A phosphoserine mark is found at Ser-610, Ser-614, Ser-616, Ser-650, and Ser-666. 2 stretches are compositionally biased toward basic and acidic residues: residues 672-681 (RGREEADALK) and 809-823 (DSKRRAQAPRDRKDP).

This sequence belongs to the FAM83 family. As to quaternary structure, interacts with SMAD1 (via MH2 domain); in a SMAD4-independent manner. Directly interacts (via DUF1669) with casein kinase isoforms CSNK1A1 and CSNK1A1L. In terms of processing, phosphorylated in vitro by CSNK1A1. BMP signaling induces the phosphorylation by BMPR1A at Ser-610, Ser-614 and Ser-616. Phosphorylation at Ser-610 is necessary for the activation of SMAD4-independent BMP target genes such as NEDD9 and ASNS.

It is found in the cytoplasm. It localises to the cytosol. The protein resides in the nucleus. Its function is as follows. Substrate for type I BMP receptor kinase involved in regulation of some target genes of the BMP signaling pathway. Also regulates the expression of several non-BMP target genes, suggesting a role in other signaling pathways. The sequence is that of Protein FAM83G (FAM83G) from Homo sapiens (Human).